The following is a 56-amino-acid chain: Large ribosomal subunit protein bL33 (56 aa).

The protein belongs to the bacterial ribosomal protein bL33 family.

This is Large ribosomal subunit protein bL33 from Dichelobacter nodosus (strain VCS1703A).